The chain runs to 518 residues: Chromosomal replication initiator protein DnaA (518 aa).

Positions 1–72 (MTLAEFWPLC…VREELAAGRS (72 aa)) are domain I, interacts with DnaA modulators. The interval 72-180 (SAFVFKPGEG…DAEEARYEQT (109 aa)) is domain II. Positions 145–178 (EPRQAAGSASRPESAAVAKARTDAQRDAEEARYE) are disordered. Over residues 164-177 (ARTDAQRDAEEARY) the composition is skewed to basic and acidic residues. Residues 181 to 397 (NLSPDYTFDT…GAFNRVGASS (217 aa)) are domain III, AAA+ region. Positions 225, 227, 228, and 229 each coordinate ATP. Residues 398-518 (RFMNRPVIDI…YEKLLILIQN (121 aa)) are domain IV, binds dsDNA.

Belongs to the DnaA family. Oligomerizes as a right-handed, spiral filament on DNA at oriC.

It is found in the cytoplasm. Its function is as follows. Plays an essential role in the initiation and regulation of chromosomal replication. ATP-DnaA binds to the origin of replication (oriC) to initiate formation of the DNA replication initiation complex once per cell cycle. Binds the DnaA box (a 9 base pair repeat at the origin) and separates the double-stranded (ds)DNA. Forms a right-handed helical filament on oriC DNA; dsDNA binds to the exterior of the filament while single-stranded (ss)DNA is stabiized in the filament's interior. The ATP-DnaA-oriC complex binds and stabilizes one strand of the AT-rich DNA unwinding element (DUE), permitting loading of DNA polymerase. After initiation quickly degrades to an ADP-DnaA complex that is not apt for DNA replication. Binds acidic phospholipids. The sequence is that of Chromosomal replication initiator protein DnaA from Neisseria meningitidis serogroup A / serotype 4A (strain DSM 15465 / Z2491).